The primary structure comprises 338 residues: MAKWGEGDPRWIVEERADATNVNNWHWTERDASNWSTDKLKTLFLAVQVQNEEGKCEVTEVSKLDGEASINNRKGKLIFFYEWSVKLNWTGTSKSGVQYKGHVEIPNLSDENSVDEVEISVSLAKDEPDTNLVALMKEEGVKLLREAMGIYISTLKTEFTQGMILPTMNGESVDPVGQPALKTEERKAKPAPSKTQARPVGVKIPTCKITLKETFLTSPEELYRVFTTQELVQAFTHAPATLEADRGGKFHMVDGNVSGEFTDLVPEKHIVMKWRFKSWPEGHFATITLTFIDKNGETELCMEGRGIPAPEEERTRQGWQRYYFEGIKQTFGYGARLF.

Lys-3 is subject to N6-acetyllysine. A Glycyl lysine isopeptide (Lys-Gly) (interchain with G-Cter in SUMO1) cross-link involves residue Lys-182. Phosphoserine is present on Ser-193. Residue Lys-203 forms a Glycyl lysine isopeptide (Lys-Gly) (interchain with G-Cter in SUMO2) linkage. The residue at position 212 (Lys-212) is an N6-acetyllysine. Residue Tyr-223 is modified to Phosphotyrosine; by ABL. Ser-258 is modified (phosphoserine).

This sequence belongs to the AHA1 family. In terms of assembly, interacts with HSPCA/HSP90. Interacts (phosphorylated on Tyr-223) with HSP90AA1; the interaction activates HSP90AA1 ATPase activity. Interacts with HSP90AB1. Interacts with GCH1. Interacts with SRPK1. Interacts with FLCN. (Microbial infection) Interacts with vesicular stomatitis virus glycoprotein (VSV G) (via cytoplasmic tail). In terms of processing, phosphorylation at Tyr-223 enhances binding to chaperone HSP90AA1. In terms of tissue distribution, expressed in numerous tissues, including brain, heart, skeletal muscle and kidney and, at lower levels, liver and placenta.

Its subcellular location is the cytoplasm. The protein localises to the cytosol. It localises to the endoplasmic reticulum. In terms of biological role, acts as a co-chaperone of HSP90AA1. Activates the ATPase activity of HSP90AA1 leading to increase in its chaperone activity. Competes with the inhibitory co-chaperone FNIP1 for binding to HSP90AA1, thereby providing a reciprocal regulatory mechanism for chaperoning of client proteins. Competes with the inhibitory co-chaperone TSC1 for binding to HSP90AA1, thereby providing a reciprocal regulatory mechanism for chaperoning of client proteins. In Homo sapiens (Human), this protein is Activator of 90 kDa heat shock protein ATPase homolog 1 (AHSA1).